A 124-amino-acid chain; its full sequence is UPF0102 protein MSMEG_2508/MSMEI_2448 (124 aa).

This sequence belongs to the UPF0102 family.

The protein is UPF0102 protein MSMEG_2508/MSMEI_2448 of Mycolicibacterium smegmatis (strain ATCC 700084 / mc(2)155) (Mycobacterium smegmatis).